Reading from the N-terminus, the 489-residue chain is Membrane-bound acylglycerophosphatidylinositol O-acyltransferase frj (489 aa).

Transmembrane regions (helical) follow at residues 2–22 (SIDD…GSYV), 40–60 (VLVV…SLAL), and 75–95 (LVTF…DFYF). Catalysis depends on residues Asn-331 and His-364. 2 helical membrane passes run 405-425 (VIFW…FLLS) and 433-453 (FYSS…ALGF).

It belongs to the membrane-bound acyltransferase family.

The protein resides in the membrane. The catalysed reaction is a 1-acyl-sn-glycero-3-phospho-(1D-myo-inositol) + (5Z,8Z,11Z,14Z)-eicosatetraenoyl-CoA = a 1-acyl-2-(5Z,8Z,11Z,14Z-eicosatetraenoyl)-sn-glycero-3-phospho-(1D-myo-inositol) + CoA. The enzyme catalyses a 1-acyl-sn-glycero-3-phosphocholine + an acyl-CoA = a 1,2-diacyl-sn-glycero-3-phosphocholine + CoA. It carries out the reaction (9Z)-hexadecenoyl-CoA + 1-hexadecanoyl-sn-glycero-3-phosphocholine = 1-hexadecanoyl-2-(9Z-hexadecenoyl)-sn-glycero-3-phosphocholine + CoA. It catalyses the reaction a 1-acyl-sn-glycero-3-phospho-L-serine + an acyl-CoA = a 1,2-diacyl-sn-glycero-3-phospho-L-serine + CoA. The catalysed reaction is 1-(9Z-octadecenoyl)-sn-glycero-3-phospho-L-serine + (9Z)-hexadecenoyl-CoA = 1-(9Z-octadecenoyl)-2-(9Z-hexadecenoyl)-sn-glycero-3-phospho-L-serine + CoA. The enzyme catalyses a 1-acyl-sn-glycero-3-phosphoethanolamine + an acyl-CoA = a 1,2-diacyl-sn-glycero-3-phosphoethanolamine + CoA. It carries out the reaction 1-hexadecanoyl-sn-glycero-3-phosphoethanolamine + (9Z)-hexadecenoyl-CoA = 1-hexadecanoyl-2-(9Z)-hexadecenoyl-sn-glycero-3-phosphoethanolamine + CoA. It participates in lipid metabolism; phospholipid metabolism. Its function is as follows. Acyltransferase that mediates the acylation of lysophospholipids to produce phospholipids (glycerophospholipids). Highest activity with lysophosphatidylinositol (1-acyl-sn-glycero-3-phospho-(1D-myo-inositol) or LPI) producing phosphatidylinositol (1,2-diacyl-sn-glycero-3-phospho-(1D-myo-inositol) or PI) (LPIAT activity), but also converts lysophosphatidylcholine (1-acyl-sn-glycero-3-phosphocholine or LPC) to phosphatidylcholine (1,2-diacyl-sn-glycero-3-phosphocholine or PC) (LPCAT activity), lysophosphatidylserine (1-acyl-2-hydroxy-sn-glycero-3-phospho-L-serine or LPS) to phosphatidylserine (1,2-diacyl-sn-glycero-3-phospho-L-serine or PS) (LPSAT activity), and lysophosphatidylethanolamine (1-acyl-sn-glycero-3-phosphoethanolamine or LPE) producing phosphatidylethanolamine (1,2-diacyl-sn-glycero-3-phosphoethanolamine or PE) (LPEAT activity). Has a preference for unsaturated fatty acid arachidonoyl-CoA ((5Z,8Z,11Z,14Z)-eicosatetraenoyl-CoA). Glycerophospholipids are important structural and functional components of cellular membrane, acyl-chain remodeling regulates the molecular species distribution of glycerophospholipids which can affect membrane fluidity and curvature. This is Membrane-bound acylglycerophosphatidylinositol O-acyltransferase frj from Drosophila melanogaster (Fruit fly).